A 250-amino-acid polypeptide reads, in one-letter code: Cyclopentanol dehydrogenase (250 aa).

Met-18, Asp-37, Asp-63, Val-64, Asn-90, Tyr-155, Lys-159, Ile-188, Thr-190, and Thr-193 together coordinate NAD(+). The Proton acceptor role is filled by Tyr-155.

This sequence belongs to the short-chain dehydrogenases/reductases (SDR) family.

The enzyme catalyses cyclopentanol + NAD(+) = cyclopentanone + NADH + H(+). It catalyses the reaction cyclohexanol + NAD(+) = cyclohexanone + NADH + H(+). It functions in the pathway alcohol metabolism; cyclopentanol degradation; 5-valerolactone from cyclopentanol: step 1/2. Its function is as follows. Catalyzes the oxidation of cyclopentanol to cyclopentanone and cyclohexanol to cyclohexanone. The activity toward cyclohexanol is 60% that of cyclopentanol. This chain is Cyclopentanol dehydrogenase, found in Comamonas sp. (strain NCIMB 9872).